An 830-amino-acid polypeptide reads, in one-letter code: uncharacterized protein (830 aa).

Residues 1-12 (MEKASKNKESGV) show a composition bias toward basic and acidic residues. Residues 1-61 (MEKASKNKES…SIKSKNKKKT (61 aa)) form a disordered region. Over residues 15–25 (ANNSFLQNFGV) the composition is skewed to polar residues. In terms of domain architecture, Helicase ATP-binding spans 249-433 (TVSKSSASGG…YSLVKFLHIN (185 aa)). 262–269 (DDMGLGKT) serves as a coordination point for ATP. Residues 384–387 (DEAH) carry the DEAH box motif. The 155-residue stretch at 662–816 (EEDDTVRGLR…KSVFTSKKLT (155 aa)) folds into the Helicase C-terminal domain. Ser712 carries the phosphoserine modification.

Belongs to the SNF2/RAD54 helicase family.

It is found in the nucleus. This is an uncharacterized protein from Schizosaccharomyces pombe (strain 972 / ATCC 24843) (Fission yeast).